Here is a 291-residue protein sequence, read N- to C-terminus: Signal peptidase I (291 aa).

Residues 1 to 45 lie on the Cytoplasmic side of the membrane; sequence MTMKKLTSTTTTLWDNKLFINNLKNFMQTNTESNNNKTTAQEWKS. The chain crosses the membrane as a helical span at residues 46–66; the sequence is FILVVVIALMIRILIIESFVV. Over 67 to 291 the chain is Periplasmic; it reads PTGSMKATIL…IFRNLYSIED (225 aa). Catalysis depends on residues serine 70 and lysine 133.

This sequence belongs to the peptidase S26 family.

It localises to the cell inner membrane. It carries out the reaction Cleavage of hydrophobic, N-terminal signal or leader sequences from secreted and periplasmic proteins.. In Rickettsia bellii (strain RML369-C), this protein is Signal peptidase I (lepB).